Reading from the N-terminus, the 285-residue chain is 2-dehydro-3-deoxyphosphooctonate aldolase (285 aa).

Belongs to the KdsA family.

The protein resides in the cytoplasm. The enzyme catalyses D-arabinose 5-phosphate + phosphoenolpyruvate + H2O = 3-deoxy-alpha-D-manno-2-octulosonate-8-phosphate + phosphate. It functions in the pathway carbohydrate biosynthesis; 3-deoxy-D-manno-octulosonate biosynthesis; 3-deoxy-D-manno-octulosonate from D-ribulose 5-phosphate: step 2/3. Its pathway is bacterial outer membrane biogenesis; lipopolysaccharide biosynthesis. The protein is 2-dehydro-3-deoxyphosphooctonate aldolase of Bordetella parapertussis (strain 12822 / ATCC BAA-587 / NCTC 13253).